The chain runs to 83 residues: UPF0248 protein PH1212.1 (83 aa).

It belongs to the UPF0248 family.

In Pyrococcus horikoshii (strain ATCC 700860 / DSM 12428 / JCM 9974 / NBRC 100139 / OT-3), this protein is UPF0248 protein PH1212.1.